Here is a 203-residue protein sequence, read N- to C-terminus: Glycerol-3-phosphate acyltransferase (203 aa).

5 helical membrane passes run Ala-12 to Leu-32, Thr-66 to Val-86, Ala-88 to Phe-108, Ile-118 to Ala-138, and Ile-159 to Ile-179.

Belongs to the PlsY family. In terms of assembly, probably interacts with PlsX.

The protein resides in the cell inner membrane. The enzyme catalyses an acyl phosphate + sn-glycerol 3-phosphate = a 1-acyl-sn-glycero-3-phosphate + phosphate. Its pathway is lipid metabolism; phospholipid metabolism. Functionally, catalyzes the transfer of an acyl group from acyl-phosphate (acyl-PO(4)) to glycerol-3-phosphate (G3P) to form lysophosphatidic acid (LPA). This enzyme utilizes acyl-phosphate as fatty acyl donor, but not acyl-CoA or acyl-ACP. The sequence is that of Glycerol-3-phosphate acyltransferase from Sinorhizobium fredii (strain NBRC 101917 / NGR234).